The chain runs to 800 residues: Putative antiporter subunit mnhA2 (800 aa).

20 helical membrane-spanning segments follow: residues 1–21 (MSLVYLLIAILVIMAMILLMS), 33–53 (IALVAPVISSIYFLIQIPSVA), 78–98 (GLSLMFSLIISLIGIAVFFYA), 118–138 (LFMFSMIGIVLSDNTILMYIF), 167–187 (FMITVFGGLALLVGFIMLYIM), 207–227 (GLFIPMIFMFLLGAFTKSAQF), 241–261 (TPVSAYLHSATMVKAGIFLLL), 273–293 (YVYIVTFVGLITMLFGSITAL), 300–320 (GILAYSTISQLGMIMAMVGIG), 331–351 (IASIYVFVLFGALFHLMNHAI), 387–407 (LVMTIAALSMAGVPFLNGFLS), 424–444 (FSLISMIAIVFVGVIASVFTF), 472–492 (PWLFSLPSLILMVLVPVIFFV), 527–547 (GFNIPLLLTIIIILLGSVLAI), 595–615 (IIMTLGIFMIIIGYGYIRIGL), 627–647 (GALEIILAIVTVTIGISLIFI), 651–671 (LTMVILNGVIGFVVTLFFIAM), 676–696 (LALTQLVVETITTILFIVSFS), 712–732 (IIKISVSLLMALIVVSLIFIT), and 768–788 (LDTLFEGLVLIITGLGIYTLL).

Belongs to the CPA3 antiporters (TC 2.A.63) subunit A family. As to quaternary structure, may form a heterooligomeric complex that consists of seven subunits: mnhA2, mnhB2, mnhC2, mnhD2, mnhE2, mnhF2 and mnhG2.

It is found in the cell membrane. This Staphylococcus aureus (strain MSSA476) protein is Putative antiporter subunit mnhA2 (mnhA2).